We begin with the raw amino-acid sequence, 101 residues long: Conopressin/conophysin, isoform 3 (101 aa).

Ala1 is a signal peptide. Cys2 and Cys7 are oxidised to a cystine. A Glycine amide modification is found at Gly10. A propeptide spanning residues 11 to 18 (GKRNVDEG) is cleaved from the precursor. 7 disulfides stabilise this stretch: Cys23–Cys63, Cys26–Cys37, Cys31–Cys53, Cys38–Cys43, Cys70–Cys88, Cys82–Cys100, and Cys89–Cys94.

The protein belongs to the vasopressin/oxytocin family. In terms of tissue distribution, expressed by the venom gland.

Its subcellular location is the secreted. In terms of biological role, targets vasopressin-oxytocin related receptors. Is more active on fish receptors than on their human counterparts, supporting an evolved role of this conopressin in the envenomation process. Acts as an agonist on zebrafish vasopressin receptors V1a1R (EC(50)=10.6 nM), V1a2R (EC(50)=44.06 nM, partial agonist), V2R (EC(50)=299.2 nM) and oxytocin receptor (EC(50)=353.73 nM, partial agonist). Shows a weaker activity on human receptors AVPR1B (EC(50)=51.92 nM), AVPR1A (EC(50)=123.78 nM), AVPR2 (EC(50)=299.2 nM) and oxytocin (OXTR) receptor (EC(50)=455.66 nM, partial agonist). In vivo, exhibits grooming and scratching behavior in mice, following intracerebral injection. This Conus monile (Necklace cone) protein is Conopressin/conophysin, isoform 3.